A 381-amino-acid chain; its full sequence is Malonyl-CoA-acyl carrier protein transacylase, mitochondrial (381 aa).

Residues Ser-151 and His-268 contribute to the active site. Lys-312 carries the post-translational modification N6-succinyllysine.

This sequence belongs to the type II malonyltransferase family. In terms of tissue distribution, expressed in retinal ganglion cells.

It is found in the mitochondrion. The catalysed reaction is holo-[ACP] + malonyl-CoA = malonyl-[ACP] + CoA. It participates in lipid metabolism; fatty acid biosynthesis. Catalyzes the transfer of a malonyl moiety from malonyl-CoA to the free thiol group of the phosphopantetheine arm of the mitochondrial ACP protein (NDUFAB1). This suggests the existence of the biosynthesis of fatty acids in mitochondria. The polypeptide is Malonyl-CoA-acyl carrier protein transacylase, mitochondrial (Mus musculus (Mouse)).